Consider the following 355-residue polypeptide: Erythronate-4-phosphate dehydrogenase (355 aa).

Residues Ser-45 and Thr-66 each coordinate substrate. Residue Asp-146 coordinates NAD(+). The active site involves Arg-206. Asp-229 provides a ligand contact to NAD(+). Residue Glu-234 is part of the active site. His-251 (proton donor) is an active-site residue. Gly-254 is an NAD(+) binding site. Residue Tyr-255 participates in substrate binding.

This sequence belongs to the D-isomer specific 2-hydroxyacid dehydrogenase family. PdxB subfamily. In terms of assembly, homodimer.

Its subcellular location is the cytoplasm. The enzyme catalyses 4-phospho-D-erythronate + NAD(+) = (R)-3-hydroxy-2-oxo-4-phosphooxybutanoate + NADH + H(+). The protein operates within cofactor biosynthesis; pyridoxine 5'-phosphate biosynthesis; pyridoxine 5'-phosphate from D-erythrose 4-phosphate: step 2/5. In terms of biological role, catalyzes the oxidation of erythronate-4-phosphate to 3-hydroxy-2-oxo-4-phosphonooxybutanoate. The sequence is that of Erythronate-4-phosphate dehydrogenase from Acinetobacter baumannii (strain ATCC 17978 / DSM 105126 / CIP 53.77 / LMG 1025 / NCDC KC755 / 5377).